Reading from the N-terminus, the 361-residue chain is Molybdopterin synthase catalytic subunit (361 aa).

Substrate contacts are provided by residues 101–102 (HR), Lys-117, and 124–126 (KKE).

It belongs to the MoaE family. MOCS2B subfamily. In terms of assembly, heterotetramer; composed of 2 small (Mocs2A) and 2 large (Mocs2B) subunits.

Its subcellular location is the cytoplasm. It catalyses the reaction 2 [molybdopterin-synthase sulfur-carrier protein]-C-terminal-Gly-aminoethanethioate + cyclic pyranopterin phosphate + H2O = molybdopterin + 2 [molybdopterin-synthase sulfur-carrier protein]-C-terminal Gly-Gly + 2 H(+). The protein operates within cofactor biosynthesis; molybdopterin biosynthesis. Catalytic subunit of the molybdopterin synthase complex, a complex that catalyzes the conversion of precursor Z into molybdopterin. Acts by mediating the incorporation of 2 sulfur atoms from thiocarboxylated Mocs2A into precursor Z to generate a dithiolene group. In Drosophila pseudoobscura pseudoobscura (Fruit fly), this protein is Molybdopterin synthase catalytic subunit.